The sequence spans 266 residues: Acetyl esterase (266 aa).

This is Acetyl esterase (xynC) from Caldicellulosiruptor saccharolyticus (Caldocellum saccharolyticum).